A 227-amino-acid polypeptide reads, in one-letter code: MASHKELIKNGLWDNNPALVQLLGLCPLLAVSATVTNALGLGIATILVLVGSNLIVSLVRQWIPQEVRIPVFVMIIASLVTCVQLLMNAYAYGLYLSLGIFIPLIVTNCIIIGRAESFASKNDPLPAVLDGLWMGMGMTAVLVLLGAMREILGNGTLFDGADLLLGDWATILRIELFHVDSHFLLAMLPPGAFLGVGFLIALKNVIDKKMADRQPKEKAEIERVRIS.

A run of 6 helical transmembrane segments spans residues 18-38 (ALVQ…VTNA), 39-59 (LGLG…VSLV), 69-89 (IPVF…LMNA), 93-113 (GLYL…IIIG), 125-145 (LPAV…LVLL), and 182-202 (HFLL…LIAL).

It belongs to the NqrDE/RnfAE family. The complex is composed of six subunits: RnfA, RnfB, RnfC, RnfD, RnfE and RnfG.

The protein localises to the cell inner membrane. In terms of biological role, part of a membrane-bound complex that couples electron transfer with translocation of ions across the membrane. In Aliivibrio fischeri (strain MJ11) (Vibrio fischeri), this protein is Ion-translocating oxidoreductase complex subunit E.